The following is a 941-amino-acid chain: MPDASLFNGTSFITLFAPNISLFQASIDFYTDRLGFAIKETSNQKLVWLQLEEDSNNVSIQLLLDPEHAASVSQIDQNIRNLTRSLYRKDWRSIQSNIAFKSSSLSKLVKLLKDGGHPVQQSPNEISPFEVYTLDPLGSLIGFSGFKNPFAVNERSLLPKVSEEKAYRTEDDSEKLFTPIRKTIGVMTSGGDSPGMNPFVRAVVRAGIYKGCKVFCIHEGYEGLVRGGEKYIKETQWHDVRGWLVEGGTNIGTARCKEFRERSGRLKACKNMIDMGIDALIVCGGDGSLTGADRFRSEWPSLIEELLQTERISQQQFETYQNLNICGAVGSIDNDMSSTDATIGAFSSLDRICRAIDYIDATANSHSRAFIVEVMGRHCGWLGLLAGLATSADYILIPEKPASSREWQDQMCDIVSKHRARGKRKTIVIVAEGAISNDLSPISCDQVKDVLVNRLGLDTRVTTLGHVQRGGTAVAFDRIYATLQGVEAVNAVLECNADTPSPMIAIKEDQITRVPLVDAVELTQQVAKSIESRNFKRAISLRDSEFVEHMKNFISTNSADHVPPSLPLEKRKKVAIINVGAPAGGMNSAVYSMATYCMSRGHVPYAIHNGFSGLARHESVRSINWLDIEGWGSLGGSEIGTNRTLPNDADIGMIAYFFEKYGFDGLILVGGFEAFISLHQLERARINYPSLRIPLVLIPATISNNVPGTEYSLGSDTCLNSFMEYCDVIKQSAAATRNRVFVVEVQGGNSGYIATHAQLACGAQISYVPEEGISLAQLEMDINSLKESFANDQGKTKSGRLILKSENASKVLTTEVISTIIDDEASGRFDSKTAIPGHVQQGGIPSPMDRVRASRFAIRAVSFIEKHSDKCQAFKNSISFRQTDEITSTAVVLGIHKSQLRFTPIRQLYDFESDVPRRMRKNIFWSNVREISDMLSGRTSL.

The tract at residues 2-558 (PDASLFNGTS…HMKNFISTNS (557 aa)) is N-terminal catalytic PFK domain 1. ATP-binding positions include G191, 255–256 (RC), and 285–288 (GDGS). Mg(2+) is bound at residue D286. Residues 331-333 (SID), R368, 375-377 (MGR), E432, R460, and 466-469 (HVQR) each bind beta-D-fructose 6-phosphate. The active-site Proton acceptor is D333. The tract at residues 559–572 (ADHVPPSLPLEKRK) is interdomain linker. The segment at 573 to 941 (KVAIINVGAP…SDMLSGRTSL (369 aa)) is C-terminal regulatory PFK domain 2. Residues R643, 701 to 705 (TISNN), R739, 746 to 748 (QGG), E806, K832, 838 to 841 (HVQQ), and R918 each bind beta-D-fructose 2,6-bisphosphate.

This sequence belongs to the phosphofructokinase type A (PFKA) family. ATP-dependent PFK group I subfamily. Eukaryotic two domain clade 'E' sub-subfamily. As to quaternary structure, heterododecamer of 4 alpha, 4 beta and 4 gamma chains. The gamma chain bridges the N-terminal halves of the alpha and beta subunits. Requires Mg(2+) as cofactor.

It localises to the cytoplasm. The enzyme catalyses beta-D-fructose 6-phosphate + ATP = beta-D-fructose 1,6-bisphosphate + ADP + H(+). It participates in carbohydrate degradation; glycolysis; D-glyceraldehyde 3-phosphate and glycerone phosphate from D-glucose: step 3/4. Allosterically activated by ADP, AMP, or fructose 2,6-bisphosphate, and allosterically inhibited by ATP or citrate. In terms of biological role, catalyzes the phosphorylation of D-fructose 6-phosphate to fructose 1,6-bisphosphate by ATP, the first committing step of glycolysis. The polypeptide is ATP-dependent 6-phosphofructokinase subunit beta (PFK2) (Komagataella phaffii (strain GS115 / ATCC 20864) (Yeast)).